Reading from the N-terminus, the 83-residue chain is Kappa-theraphotoxin-Cg2a (83 aa).

A signal peptide spans 1-21 (MKGSAFAIILGLVVLCACSFA). Residues 22–53 (EDEQDQFASPNELLRSMFLESRHELIPEVEGR) constitute a propeptide that is removed on maturation. Cystine bridges form between cysteine 55–cysteine 69, cysteine 62–cysteine 74, and cysteine 68–cysteine 78. Leucine 82 bears the Leucine amide mark.

This sequence belongs to the neurotoxin 30 (phrixotoxin) family. As to expression, expressed by the venom gland.

It is found in the secreted. Its function is as follows. Inhibits voltage-gated potassium channels of the subtype Kv4.1/KCND1 with high affinity and shows weak effects on Kv4.2/KCND2 and Kv2.1/KCNB1 subtypes. The toxin modifies the gating behavior of the channel and may interact with the S3-S4 extracellular loop. This is Kappa-theraphotoxin-Cg2a from Chilobrachys guangxiensis (Chinese earth tiger tarantula).